The primary structure comprises 90 residues: Acylphosphatase (90 aa).

The region spanning 4 to 90 (RMYVKVYGIV…KGEFNNFDTY (87 aa)) is the Acylphosphatase-like domain. Active-site residues include arginine 19 and asparagine 37.

Belongs to the acylphosphatase family.

The catalysed reaction is an acyl phosphate + H2O = a carboxylate + phosphate + H(+). The protein is Acylphosphatase (acyP) of Sulfurisphaera tokodaii (strain DSM 16993 / JCM 10545 / NBRC 100140 / 7) (Sulfolobus tokodaii).